A 96-amino-acid chain; its full sequence is Large ribosomal subunit protein bL25 (96 aa).

This sequence belongs to the bacterial ribosomal protein bL25 family. As to quaternary structure, part of the 50S ribosomal subunit; part of the 5S rRNA/L5/L18/L25 subcomplex. Contacts the 5S rRNA. Binds to the 5S rRNA independently of L5 and L18.

Functionally, this is one of the proteins that binds to the 5S RNA in the ribosome where it forms part of the central protuberance. This is Large ribosomal subunit protein bL25 from Francisella tularensis subsp. tularensis (strain FSC 198).